Consider the following 341-residue polypeptide: N-acetyl-gamma-glutamyl-phosphate reductase (341 aa).

C147 is a catalytic residue.

The protein belongs to the NAGSA dehydrogenase family. Type 1 subfamily.

The protein resides in the cytoplasm. The enzyme catalyses N-acetyl-L-glutamate 5-semialdehyde + phosphate + NADP(+) = N-acetyl-L-glutamyl 5-phosphate + NADPH + H(+). The protein operates within amino-acid biosynthesis; L-arginine biosynthesis; N(2)-acetyl-L-ornithine from L-glutamate: step 3/4. Its function is as follows. Catalyzes the NADPH-dependent reduction of N-acetyl-5-glutamyl phosphate to yield N-acetyl-L-glutamate 5-semialdehyde. This is N-acetyl-gamma-glutamyl-phosphate reductase from Dehalococcoides mccartyi (strain CBDB1).